Reading from the N-terminus, the 1354-residue chain is Rho-associated protein kinase 1 (1354 aa).

The residue at position 2 (Ser2) is an N-acetylserine. In terms of domain architecture, Protein kinase spans 76–338 (YEVVKVIGRG…VEEIKRHLFF (263 aa)). ATP-binding positions include 82–90 (IGRGAFGEV) and Lys105. The Proton acceptor role is filled by Asp198. Residues 341 to 409 (DQWAWETLRD…YSNRRYLPSA (69 aa)) enclose the AGC-kinase C-terminal domain. Residues 368–727 (FDDLEEDKGD…KKLKEEREAR (360 aa)) are interaction with FHOD1. Positions 422 to 692 (KSLQESLQKT…RLEQEVNEHK (271 aa)) form a coiled coil. An REM-1 domain is found at 479–556 (SAVSQIEKEK…LEEANDLLRT (78 aa)). The SHROOM3 binding stretch occupies residues 707-946 (EAKSVAMCEM…TVSRLEETNS (240 aa)). One can recognise a RhoBD domain in the interval 949–1015 (TKDIEMLRKE…LAEIMNRKDF (67 aa)). The segment at 998–1010 (LKTQAVNKLAEIM) is RHOA binding. A coiled-coil region spans residues 1011–1102 (NRKDFKIDRK…KLLDLSDSTS (92 aa)). A phosphoserine mark is found at Ser1105 and Ser1108. The auto-inhibitory stretch occupies residues 1115-1354 (NLPESRIEGW…VVKNTSGKTS (240 aa)). The 200-residue stretch at 1118-1317 (ESRIEGWLSV…WVTHLVKKIP (200 aa)) folds into the PH domain. The Phorbol-ester/DAG-type zinc finger occupies 1228 to 1283 (GHEFIPTLYHFPANCEACAKPLWHVFKPPPALECRRCHVKCHRDHLDKKEDLISPC). The residue at position 1328 (Ser1328) is a Phosphoserine. Residues 1333-1354 (STRSTANQSFRKVVKNTSGKTS) form a disordered region.

This sequence belongs to the protein kinase superfamily. AGC Ser/Thr protein kinase family. As to quaternary structure, homodimer. Interacts with RHOA (activated by GTP), RHOB, RHOC, GEM, MYLC2B, RHOE, PPP1R12A, LIMK1, LIMK2, TSG101, CHORDC1, DAPK3, PFN1 and JIP3. Interacts with FHOD1 in a Src-dependent manner. Interacts with PTEN. Interacts with ITGB1BP1 (via N-terminus and PTB domain). Interacts with SHROOM3. Mg(2+) is required as a cofactor. In terms of processing, autophosphorylated on serine and threonine residues. Cleaved by caspase-3 during apoptosis. This leads to constitutive activation of the kinase and membrane blebbing. In terms of tissue distribution, highly expressed in brain, heart, lung, liver, stomach, spleen, kidney, testis, muscle, embryo and placenta.

The protein localises to the cytoplasm. The protein resides in the cytoskeleton. It localises to the microtubule organizing center. Its subcellular location is the centrosome. It is found in the centriole. The protein localises to the golgi apparatus membrane. The protein resides in the cell projection. It localises to the bleb. Its subcellular location is the cell membrane. It is found in the lamellipodium. The protein localises to the ruffle. It catalyses the reaction L-seryl-[protein] + ATP = O-phospho-L-seryl-[protein] + ADP + H(+). The catalysed reaction is L-threonyl-[protein] + ATP = O-phospho-L-threonyl-[protein] + ADP + H(+). Activated by RHOA binding. Inhibited by Y-27632. Functionally, protein kinase which is a key regulator of the actin cytoskeleton and cell polarity. Involved in regulation of smooth muscle contraction, actin cytoskeleton organization, stress fiber and focal adhesion formation, neurite retraction, cell adhesion and motility via phosphorylation of DAPK3, GFAP, LIMK1, LIMK2, MYL9/MLC2, TPPP, PFN1 and PPP1R12A. Phosphorylates FHOD1 and acts synergistically with it to promote SRC-dependent non-apoptotic plasma membrane blebbing. Phosphorylates JIP3 and regulates the recruitment of JNK to JIP3 upon UVB-induced stress. Acts as a suppressor of inflammatory cell migration by regulating PTEN phosphorylation and stability. Acts as a negative regulator of VEGF-induced angiogenic endothelial cell activation. Required for centrosome positioning and centrosome-dependent exit from mitosis. Plays a role in terminal erythroid differentiation. Inhibits podocyte motility via regulation of actin cytoskeletal dynamics and phosphorylation of CFL1. Promotes keratinocyte terminal differentiation. Involved in osteoblast compaction through the fibronectin fibrillogenesis cell-mediated matrix assembly process, essential for osteoblast mineralization. May regulate closure of the eyelids and ventral body wall by inducing the assembly of actomyosin bundles. This Mus musculus (Mouse) protein is Rho-associated protein kinase 1 (Rock1).